The sequence spans 453 residues: Zinc finger CCCH domain-containing protein 26 (453 aa).

Residues 1 to 15 (MSETQQQVQNSTGSI) are compositionally biased toward polar residues. Positions 1–47 (MSETQQQVQNSTGSIRSPDKIEDTFRRMKVNEDNMEQSSPYPDRPGE) are disordered. Ser2 carries the N-acetylserine modification. Over residues 17–32 (SPDKIEDTFRRMKVNE) the composition is skewed to basic and acidic residues. 5 C3H1-type zinc fingers span residues 44–72 (RPGE…HPLT), 95–112 (ETGA…HPKD), 129–157 (RQGE…HPHP), 261–289 (FSER…HPKE), and 307–335 (RPGQ…HSML). Positions 360–379 (STNLRISSPPSPSDMTTLSN) are enriched in polar residues. The tract at residues 360 to 453 (STNLRISSPP…KVQDSSDKST (94 aa)) is disordered. A compositionally biased stretch (basic and acidic residues) spans 391–407 (ETEKQDDSPTEPEKSEV). Residues 413–422 (PNGSDSTSLP) show a composition bias toward polar residues. The segment covering 441–453 (DSSKVQDSSDKST) has biased composition (basic and acidic residues).

The protein localises to the nucleus. The sequence is that of Zinc finger CCCH domain-containing protein 26 (ZFN2) from Arabidopsis thaliana (Mouse-ear cress).